A 124-amino-acid chain; its full sequence is Small ribosomal subunit protein uS12 (124 aa).

Positions 1–32 (MPTIQQLVRKGREDKVVKTKTPALKGSPQRRG) are disordered. A 3-methylthioaspartic acid modification is found at D89. Residues 105–124 (QGVKNRKQARSRYGAKKEKS) form a disordered region. Basic residues predominate over residues 108–118 (KNRKQARSRYG).

Belongs to the universal ribosomal protein uS12 family. Part of the 30S ribosomal subunit. Contacts proteins S8 and S17. May interact with IF1 in the 30S initiation complex.

Its function is as follows. With S4 and S5 plays an important role in translational accuracy. Functionally, interacts with and stabilizes bases of the 16S rRNA that are involved in tRNA selection in the A site and with the mRNA backbone. Located at the interface of the 30S and 50S subunits, it traverses the body of the 30S subunit contacting proteins on the other side and probably holding the rRNA structure together. The combined cluster of proteins S8, S12 and S17 appears to hold together the shoulder and platform of the 30S subunit. This Kineococcus radiotolerans (strain ATCC BAA-149 / DSM 14245 / SRS30216) protein is Small ribosomal subunit protein uS12.